Consider the following 600-residue polypeptide: Aspartate--tRNA(Asp/Asn) ligase (600 aa).

Residue Glu-187 participates in L-aspartate binding. Residues 211 to 214 (QIFK) are aspartate. L-aspartate-binding residues include Arg-233 and His-463. Residue 233 to 235 (RDE) coordinates ATP. Glu-497 provides a ligand contact to ATP. Position 504 (Arg-504) interacts with L-aspartate. 549 to 552 (GVDR) provides a ligand contact to ATP.

This sequence belongs to the class-II aminoacyl-tRNA synthetase family. Type 1 subfamily. Homodimer.

Its subcellular location is the cytoplasm. It catalyses the reaction tRNA(Asx) + L-aspartate + ATP = L-aspartyl-tRNA(Asx) + AMP + diphosphate. In terms of biological role, aspartyl-tRNA synthetase with relaxed tRNA specificity since it is able to aspartylate not only its cognate tRNA(Asp) but also tRNA(Asn). Reaction proceeds in two steps: L-aspartate is first activated by ATP to form Asp-AMP and then transferred to the acceptor end of tRNA(Asp/Asn). The polypeptide is Aspartate--tRNA(Asp/Asn) ligase (Wolbachia pipientis subsp. Culex pipiens (strain wPip)).